A 145-amino-acid chain; its full sequence is Arginine repressor (145 aa).

This sequence belongs to the ArgR family.

Its subcellular location is the cytoplasm. It participates in amino-acid biosynthesis; L-arginine biosynthesis [regulation]. Functionally, regulates arginine biosynthesis genes. The polypeptide is Arginine repressor (Solibacter usitatus (strain Ellin6076)).